Consider the following 249-residue polypeptide: MAGHSQFKNIMHRKGRQDAVRSKMFSKLAREITVAAKSGTPDPSMNPRLRLAIQNAKAVSMPKDNIQRAINKASMGDAENYEAVRYEGYGPGGVAVIVEALTDNRNRSASNVRAAFTKAGGAMGETGSVSFMWDRVGEIYYPASAGSADKVMEAAIEAGADDVESDEEGHTIYCAFENLGEVSKALEAALGEAESVKLIWRPQNNVPVDEERAQSLMKLVATLEDDDDVQSVYANFEVDDETLAKLSAA.

The protein belongs to the TACO1 family.

It localises to the cytoplasm. The sequence is that of Probable transcriptional regulatory protein mll3945 from Mesorhizobium japonicum (strain LMG 29417 / CECT 9101 / MAFF 303099) (Mesorhizobium loti (strain MAFF 303099)).